The primary structure comprises 364 residues: Uroporphyrinogen decarboxylase (364 aa).

Substrate-binding positions include R28–R32, D78, Y160, T215, and H333.

The protein belongs to the uroporphyrinogen decarboxylase family. As to quaternary structure, homodimer.

Its subcellular location is the cytoplasm. The catalysed reaction is uroporphyrinogen III + 4 H(+) = coproporphyrinogen III + 4 CO2. Its pathway is porphyrin-containing compound metabolism; protoporphyrin-IX biosynthesis; coproporphyrinogen-III from 5-aminolevulinate: step 4/4. Its function is as follows. Catalyzes the decarboxylation of four acetate groups of uroporphyrinogen-III to yield coproporphyrinogen-III. In Burkholderia thailandensis (strain ATCC 700388 / DSM 13276 / CCUG 48851 / CIP 106301 / E264), this protein is Uroporphyrinogen decarboxylase.